The chain runs to 369 residues: Methionine import ATP-binding protein MetN 2 (369 aa).

In terms of domain architecture, ABC transporter spans 33 to 270; it reads VRFIGLGKTY…PRHEVTRTLL (238 aa). 67 to 74 is a binding site for ATP; sequence GRSGAGKS.

Belongs to the ABC transporter superfamily. Methionine importer (TC 3.A.1.24) family. In terms of assembly, the complex is composed of two ATP-binding proteins (MetN), two transmembrane proteins (MetI) and a solute-binding protein (MetQ).

It localises to the cell inner membrane. It catalyses the reaction L-methionine(out) + ATP + H2O = L-methionine(in) + ADP + phosphate + H(+). It carries out the reaction D-methionine(out) + ATP + H2O = D-methionine(in) + ADP + phosphate + H(+). Its function is as follows. Part of the ABC transporter complex MetNIQ involved in methionine import. Responsible for energy coupling to the transport system. This chain is Methionine import ATP-binding protein MetN 2, found in Pseudomonas putida (strain ATCC 47054 / DSM 6125 / CFBP 8728 / NCIMB 11950 / KT2440).